Here is a 425-residue protein sequence, read N- to C-terminus: Protein upregulated in glial subsets pugs-5 (425 aa).

Residues 355 to 373 show a composition bias toward basic and acidic residues; it reads NNNDVEKSTQIEKKPEKQG. Residues 355–407 are disordered; it reads NNNDVEKSTQIEKKPEKQGPEIQEEVVEMETVKDEQPPKTSAVRFKENSPRLM.

The protein is Protein upregulated in glial subsets pugs-5 of Caenorhabditis elegans.